A 252-amino-acid chain; its full sequence is Imidazole glycerol phosphate synthase subunit HisF (252 aa).

Residues aspartate 11 and aspartate 130 contribute to the active site.

Belongs to the HisA/HisF family. As to quaternary structure, heterodimer of HisH and HisF.

It is found in the cytoplasm. It carries out the reaction 5-[(5-phospho-1-deoxy-D-ribulos-1-ylimino)methylamino]-1-(5-phospho-beta-D-ribosyl)imidazole-4-carboxamide + L-glutamine = D-erythro-1-(imidazol-4-yl)glycerol 3-phosphate + 5-amino-1-(5-phospho-beta-D-ribosyl)imidazole-4-carboxamide + L-glutamate + H(+). It participates in amino-acid biosynthesis; L-histidine biosynthesis; L-histidine from 5-phospho-alpha-D-ribose 1-diphosphate: step 5/9. In terms of biological role, IGPS catalyzes the conversion of PRFAR and glutamine to IGP, AICAR and glutamate. The HisF subunit catalyzes the cyclization activity that produces IGP and AICAR from PRFAR using the ammonia provided by the HisH subunit. The polypeptide is Imidazole glycerol phosphate synthase subunit HisF (Thermococcus kodakarensis (strain ATCC BAA-918 / JCM 12380 / KOD1) (Pyrococcus kodakaraensis (strain KOD1))).